Reading from the N-terminus, the 359-residue chain is MVRLSNLVSCLGLASAVTAAVVDLVPKNFDDVVLKSGKPALVEFFAPWCGHCKNLAPVYEELGQAFAHASDKVTVGKVDADEHRDLGRKFGVQGFPTLKWFDGKSDEPEDYKGGRDLESLSSFISEKTGVKPRGPKKEPSKVEMLNDATFKGAVGGDNDVLVAFTAPWCGHCKNLAPTWEALANDFVLEPNVVIAKVDADAENGKATAREQGVSGYPTIKFFPKGSTESVPYEGARSEQAFIDFLNEKTGTHRTVGGGLDTKAGTIASLDELIASTSAADLAAAVKKAATELKDKYAQYYVKVADKLSQNAEYAAKELARLEKILAKGGSAPEKVDDLISRSNILRKFVGEEKEAKDEL.

A signal peptide spans methionine 1–alanine 19. Thioredoxin domains lie at alanine 20–glycine 129 and lysine 131–glycine 250. Active-site nucleophile residues include cysteine 49, cysteine 52, cysteine 169, and cysteine 172. 2 disulfides stabilise this stretch: cysteine 49/cysteine 52 and cysteine 169/cysteine 172. The Prevents secretion from ER motif lies at lysine 356–leucine 359.

This sequence belongs to the protein disulfide isomerase family.

It localises to the endoplasmic reticulum lumen. The catalysed reaction is Catalyzes the rearrangement of -S-S- bonds in proteins.. This chain is Protein disulfide-isomerase tigA (tigA), found in Aspergillus niger.